Consider the following 515-residue polypeptide: Galactose/methyl galactoside import ATP-binding protein MglA (515 aa).

ABC transporter domains are found at residues 8-243 (LEMR…VGRE) and 254-499 (IPKE…AKYL). 40-47 (GENGAGKS) is an ATP binding site.

The protein belongs to the ABC transporter superfamily. Galactose/methyl galactoside importer (TC 3.A.1.2.3) family. The complex is composed of one ATP-binding protein (MglA), two transmembrane proteins (MglC) and a solute-binding protein (MglB).

It is found in the cell membrane. The enzyme catalyses D-galactose(out) + ATP + H2O = D-galactose(in) + ADP + phosphate + H(+). It carries out the reaction methyl beta-D-galactoside(out) + ATP + H2O = methyl beta-D-galactoside(in) + ADP + phosphate + H(+). Its function is as follows. Part of the ABC transporter complex MglABC involved in galactose/methyl galactoside import. Responsible for energy coupling to the transport system. This is Galactose/methyl galactoside import ATP-binding protein MglA from Clostridium perfringens (strain SM101 / Type A).